We begin with the raw amino-acid sequence, 116 residues long: Large ribosomal subunit protein bL19 (116 aa).

The protein belongs to the bacterial ribosomal protein bL19 family.

Its function is as follows. This protein is located at the 30S-50S ribosomal subunit interface and may play a role in the structure and function of the aminoacyl-tRNA binding site. The sequence is that of Large ribosomal subunit protein bL19 from Fusobacterium nucleatum subsp. nucleatum (strain ATCC 25586 / DSM 15643 / BCRC 10681 / CIP 101130 / JCM 8532 / KCTC 2640 / LMG 13131 / VPI 4355).